Consider the following 412-residue polypeptide: Putative competence-damage inducible protein (412 aa).

It belongs to the CinA family.

In Clostridium perfringens (strain SM101 / Type A), this protein is Putative competence-damage inducible protein.